We begin with the raw amino-acid sequence, 385 residues long: UPF0284 protein PMM0439 (385 aa).

The protein belongs to the UPF0284 family.

The sequence is that of UPF0284 protein PMM0439 from Prochlorococcus marinus subsp. pastoris (strain CCMP1986 / NIES-2087 / MED4).